Reading from the N-terminus, the 1192-residue chain is Methionine synthase (1192 aa).

Positions 1–312 (MTAADKHLYD…AHIREVAAAV (312 aa)) constitute a Hcy-binding domain. Cys-231, Cys-297, and Cys-298 together coordinate Zn(2+). The 259-residue stretch at 343–601 (VLVIGERTNA…RIPEEQRNVA (259 aa)) folds into the Pterin-binding domain. In terms of domain architecture, B12-binding N-terminal spans 635-728 (RLAELAGLPL…HMERSDDDSG (94 aa)). Positions 729–866 (KGRIVLATVK…SAKRGEAPDE (138 aa)) constitute a B12-binding domain. Methylcob(III)alamin-binding positions include 739–743 (GDVHD), His-742, Ser-787, and Ala-845. Residues 860–904 (RGEAPDENSPEAIKAREKEAERKARHQRSKRIAAQRKAAEEPVEV) are disordered. Residues 872–881 (IKAREKEAER) are compositionally biased toward basic and acidic residues. Positions 882 to 893 (KARHQRSKRIAA) are enriched in basic residues. One can recognise an AdoMet activation domain in the interval 893-1192 (AQRKAAEEPV…HHPEAKYFNV (300 aa)). Residues Asp-940, Arg-1135, and 1189-1190 (YF) contribute to the S-adenosyl-L-methionine site.

The protein belongs to the vitamin-B12 dependent methionine synthase family. Methylcob(III)alamin is required as a cofactor. Requires Zn(2+) as cofactor.

It carries out the reaction (6S)-5-methyl-5,6,7,8-tetrahydrofolate + L-homocysteine = (6S)-5,6,7,8-tetrahydrofolate + L-methionine. Its pathway is amino-acid biosynthesis; L-methionine biosynthesis via de novo pathway; L-methionine from L-homocysteine (MetH route): step 1/1. In terms of biological role, catalyzes the transfer of a methyl group from methyl-cobalamin to homocysteine, yielding enzyme-bound cob(I)alamin and methionine. Subsequently, remethylates the cofactor using methyltetrahydrofolate. This is Methionine synthase (metH) from Mycobacterium tuberculosis (strain ATCC 25618 / H37Rv).